The following is a 151-amino-acid chain: UPF0178 protein PSHAb0045 (151 aa).

The protein belongs to the UPF0178 family.

The polypeptide is UPF0178 protein PSHAb0045 (Pseudoalteromonas translucida (strain TAC 125)).